The following is a 265-amino-acid chain: Undecaprenyl-diphosphatase (265 aa).

A run of 7 helical transmembrane segments spans residues 41 to 61, 75 to 95, 104 to 124, 137 to 157, 180 to 200, 215 to 235, and 244 to 264; these read IAYTFGLFMEMGSIGSALIYF, LKFLVVVTALTGIVGVPLYVI, YNPSIPMIFLGIALIADGIYI, LSTKEMILIGIAQGIAALPGV, YSYLAYIPAAIGSVGTTLLFT, GIALAVISALLTGLVVIGFLL, and YLIDFMLGGIAVLVSMLGLII.

The protein belongs to the UppP family.

It is found in the cell membrane. The catalysed reaction is di-trans,octa-cis-undecaprenyl diphosphate + H2O = di-trans,octa-cis-undecaprenyl phosphate + phosphate + H(+). Catalyzes the dephosphorylation of undecaprenyl diphosphate (UPP). The chain is Undecaprenyl-diphosphatase from Saccharolobus islandicus (strain Y.G.57.14 / Yellowstone #1) (Sulfolobus islandicus).